Consider the following 358-residue polypeptide: Heat-inducible transcription repressor HrcA (358 aa).

The protein belongs to the HrcA family.

Functionally, negative regulator of class I heat shock genes (grpE-dnaK-dnaJ and groELS operons). Prevents heat-shock induction of these operons. This is Heat-inducible transcription repressor HrcA from Caulobacter vibrioides (strain ATCC 19089 / CIP 103742 / CB 15) (Caulobacter crescentus).